The following is an 834-amino-acid chain: Ras GTPase-activating protein 3 (834 aa).

C2 domains are found at residues 1–112 and 123–263; these read MAVE…DTWF and VQGK…EAWY. N-acetylalanine is present on A2. Residue Y66 is modified to Phosphotyrosine. Position 77 is a phosphoserine (S77). T110 is subject to Phosphothreonine. A Ras-GAP domain is found at 346–561; the sequence is GRVVPFISAI…DAVKNFLDLI (216 aa). In terms of domain architecture, PH spans 576–677; that stretch reads ILLKEGFMIK…WIDILTKVSQ (102 aa). Residues 679 to 715 form a Btk-type zinc finger; it reads NQKRLTVFHPSAYLNGHWLCCRASSDTAIGCTPCTGG. Zn(2+) contacts are provided by H687, C698, C699, and C709. Residues S809 and S833 each carry the phosphoserine modification.

Functionally, inhibitory regulator of the Ras-cyclic AMP pathway. Binds inositol tetrakisphosphate (IP4). The sequence is that of Ras GTPase-activating protein 3 (Rasa3) from Rattus norvegicus (Rat).